Consider the following 426-residue polypeptide: Probable glucose-6-phosphate isomerase (426 aa).

Catalysis depends on glutamate 272, which acts as the Proton donor. Residues histidine 293 and lysine 404 contribute to the active site.

The protein belongs to the GPI family.

Its subcellular location is the cytoplasm. The enzyme catalyses alpha-D-glucose 6-phosphate = beta-D-fructose 6-phosphate. Its pathway is carbohydrate biosynthesis; gluconeogenesis. It functions in the pathway carbohydrate degradation; glycolysis; D-glyceraldehyde 3-phosphate and glycerone phosphate from D-glucose: step 2/4. Functionally, catalyzes the reversible isomerization of glucose-6-phosphate to fructose-6-phosphate. This chain is Probable glucose-6-phosphate isomerase, found in Halobacterium salinarum (strain ATCC 700922 / JCM 11081 / NRC-1) (Halobacterium halobium).